The primary structure comprises 357 residues: NADH-quinone oxidoreductase subunit H (357 aa).

A run of 8 helical transmembrane segments spans residues 26–46, 92–112, 127–147, 164–184, 203–223, 259–279, 294–314, and 329–349; these read LVKI…LTLW, ALFV…WAVI, LLFV…AGWA, MISY…VTGS, GLTF…IYII, FFLA…LMFL, VPGW…FIWF, and LGWK…AIWM.

It belongs to the complex I subunit 1 family. As to quaternary structure, NDH-1 is composed of 14 different subunits. Subunits NuoA, H, J, K, L, M, N constitute the membrane sector of the complex.

Its subcellular location is the cell inner membrane. It carries out the reaction a quinone + NADH + 5 H(+)(in) = a quinol + NAD(+) + 4 H(+)(out). Its function is as follows. NDH-1 shuttles electrons from NADH, via FMN and iron-sulfur (Fe-S) centers, to quinones in the respiratory chain. The immediate electron acceptor for the enzyme in this species is believed to be ubiquinone. Couples the redox reaction to proton translocation (for every two electrons transferred, four hydrogen ions are translocated across the cytoplasmic membrane), and thus conserves the redox energy in a proton gradient. This subunit may bind ubiquinone. The polypeptide is NADH-quinone oxidoreductase subunit H (Janthinobacterium sp. (strain Marseille) (Minibacterium massiliensis)).